Consider the following 128-residue polypeptide: 3-aminoacrylate deaminase RutC (128 aa).

Belongs to the RutC family.

It carries out the reaction (Z)-3-aminoacrylate + H2O + H(+) = 3-oxopropanoate + NH4(+). Functionally, involved in pyrimidine catabolism. Catalyzes the deamination of 3-aminoacrylate to malonic semialdehyde, a reaction that can also occur spontaneously. RutC may facilitate the reaction and modulate the metabolic fitness, rather than catalyzing essential functions. The chain is 3-aminoacrylate deaminase RutC from Enterobacter sp. (strain 638).